The chain runs to 576 residues: Trehalase (576 aa).

An N-terminal signal peptide occupies residues 1–20; the sequence is MTWELHLLLLLGLGLRSQEA. Asn-75 is a glycosylation site (N-linked (GlcNAc...) asparagine). Substrate contacts are provided by residues Arg-165, 172 to 173, Asn-209, and 218 to 220; these read WD and RSQ. Asn-258 is a glycosylation site (N-linked (GlcNAc...) asparagine). Substrate is bound by residues 283-285 and Gly-316; that span reads RPE. The Proton donor/acceptor role is filled by Asp-318. A glycan (N-linked (GlcNAc...) asparagine) is linked at Asn-366. Glu-511 serves as the catalytic Proton donor/acceptor. Residue Glu-526 coordinates substrate. A lipid anchor (GPI-anchor amidated serine) is attached at Ser-553. Positions 554–576 are cleaved as a propeptide — removed in mature form; the sequence is GTQLASLGPHCLVAALLLSLLLQ.

This sequence belongs to the glycosyl hydrolase 37 family. In terms of assembly, homodimer; disulfide-linked.

It localises to the cell membrane. It catalyses the reaction alpha,alpha-trehalose + H2O = alpha-D-glucose + beta-D-glucose. In terms of biological role, intestinal trehalase is probably involved in the hydrolysis of ingested trehalose. This Mus musculus (Mouse) protein is Trehalase.